The chain runs to 591 residues: DEAD-box ATP-dependent RNA helicase 30 (591 aa).

Residues M1–L109 form a disordered region. A compositionally biased stretch (gly residues) spans F72 to G103. A Q motif motif is present at residues K165–A193. The Helicase ATP-binding domain maps to W196–A371. A209 to T216 provides a ligand contact to ATP. A DEAD box motif is present at residues D319–D322. Residues R399–V544 enclose the Helicase C-terminal domain. A disordered region spans residues S547–W591. Positions S549–F571 are enriched in gly residues.

This sequence belongs to the DEAD box helicase family. DDX5/DBP2 subfamily.

It localises to the nucleus. The catalysed reaction is ATP + H2O = ADP + phosphate + H(+). Its function is as follows. ATP-dependent RNA helicase involved nonsense-mediated mRNA decay and ribosome biogenesis through rRNA processing. This is DEAD-box ATP-dependent RNA helicase 30 (RH30) from Arabidopsis thaliana (Mouse-ear cress).